A 147-amino-acid polypeptide reads, in one-letter code: Large ribosomal subunit protein uL15 (147 aa).

Residues 1 to 20 (MTMHLNDLKPADGARTERTR) are compositionally biased toward basic and acidic residues. A disordered region spans residues 1–64 (MTMHLNDLKP…GGQTPMQRRL (64 aa)). The span at 23–33 (RGIGSGLGKTC) shows a compositional bias: gly residues. Basic residues predominate over residues 34–47 (GRGHKGSFARKGGG).

The protein belongs to the universal ribosomal protein uL15 family. Part of the 50S ribosomal subunit.

In terms of biological role, binds to the 23S rRNA. This is Large ribosomal subunit protein uL15 from Xanthomonas campestris pv. campestris (strain 8004).